The sequence spans 560 residues: Mitogen-activated protein kinase kinase kinase 3 (560 aa).

Residues 70–91 form a disordered region; sequence KRQSSSSSDNTSDKEEVETEET. The region spanning 303–557 is the Protein kinase domain; the sequence is WLKGQLLGRG…AAELLHHPFV (255 aa). ATP is bound by residues 309 to 317 and Lys-331; that span reads LGRGSYASV. Asp-426 acts as the Proton acceptor in catalysis.

This sequence belongs to the protein kinase superfamily. STE Ser/Thr protein kinase family. MAP kinase kinase kinase subfamily. In terms of tissue distribution, expressed at low levels in roots, stems, siliques, leaves, seedlings and flower buds.

The catalysed reaction is L-seryl-[protein] + ATP = O-phospho-L-seryl-[protein] + ADP + H(+). It carries out the reaction L-threonyl-[protein] + ATP = O-phospho-L-threonyl-[protein] + ADP + H(+). The protein is Mitogen-activated protein kinase kinase kinase 3 of Arabidopsis thaliana (Mouse-ear cress).